Here is a 521-residue protein sequence, read N- to C-terminus: U4/U6 small nuclear ribonucleoprotein Prp4 (521 aa).

At Lys-26 the chain carries N6-acetyllysine. 7 WD repeats span residues 228–267 (GDDRPISYCHFSPNSKMLATACWSGLCKLWSVPDCNLLHT), 270–317 (GHNT…PVAD), 320–359 (GHTVRVARVMWHPSGRFLGTTCYDRSWRLWDLEAQEEILH), 362–401 (GHSMGVYDIAFHQDGSLAGTGGLDAFGRVWDLRTGRCIMF), 404–443 (GHLKEIYGINFSPNGYHIATGSGDNTCKVWDLRQRRCVYT), 446–486 (AHQN…PLKT), and 489–521 (GHEGKVMGLDISSDGQLIATCSYDRTFKLWMAE).

Component of the precatalytic spliceosome (spliceosome B complex). Component of the U4/U6-U5 tri-snRNP complex, a building block of the precatalytic spliceosome (spliceosome B complex). The U4/U6-U5 tri-snRNP complex is composed of the U4, U6 and U5 snRNAs and at least PRPF3, PRPF4, PRPF6, PRPF8, PRPF31, SNRNP200, TXNL4A, SNRNP40, SNRPB, SNRPD1, SNRPD2, SNRPD3, SNRPE, SNRPF, SNRPG, DDX23, CD2BP2, PPIH, SNU13, EFTUD2, SART1 and USP39, plus LSM2, LSM3, LSM4, LSM5, LSM6, LSM7 and LSM8. Interacts directly with PRPF18, PPIH and PRPF3. Part of a heteromeric complex containing PPIH, PRPF3 and PRPF4 that is stable in the absence of RNA. Interacts with ERCC6.

It localises to the nucleus. It is found in the nucleus speckle. Its function is as follows. Plays a role in pre-mRNA splicing as component of the U4/U6-U5 tri-snRNP complex that is involved in spliceosome assembly, and as component of the precatalytic spliceosome (spliceosome B complex). This Pongo abelii (Sumatran orangutan) protein is U4/U6 small nuclear ribonucleoprotein Prp4 (PRPF4).